A 240-amino-acid chain; its full sequence is Ribose-5-phosphate isomerase (240 aa).

Residues 34–37 (SGST), 88–91 (DGAD), and 101–104 (KGGG) contribute to the substrate site. Catalysis depends on E110, which acts as the Proton acceptor. Position 128 (K128) interacts with substrate.

It belongs to the ribose 5-phosphate isomerase family.

It localises to the cytoplasm. The catalysed reaction is aldehydo-D-ribose 5-phosphate = D-ribulose 5-phosphate. It participates in carbohydrate degradation; pentose phosphate pathway; D-ribose 5-phosphate from D-ribulose 5-phosphate (non-oxidative stage): step 1/1. Functionally, involved in the first step of the non-oxidative branch of the pentose phosphate pathway. It catalyzes the reversible conversion of ribose-5-phosphate to ribulose 5-phosphate. This is Ribose-5-phosphate isomerase (RKI1) from Candida albicans (strain SC5314 / ATCC MYA-2876) (Yeast).